Here is a 561-residue protein sequence, read N- to C-terminus: Potassium-transporting ATPase potassium-binding subunit (561 aa).

Helical transmembrane passes span Leu-5–Val-25, Tyr-60–Leu-80, Val-86–Val-106, Gly-131–Ile-151, Ile-177–Ser-197, Pro-247–Thr-267, Leu-281–Ala-301, Phe-324–Val-344, Gly-376–Gly-396, Ala-415–Leu-435, Ala-488–Ala-508, and Gly-537–Ala-557.

This sequence belongs to the KdpA family. In terms of assembly, the system is composed of three essential subunits: KdpA, KdpB and KdpC.

It is found in the cell membrane. Its function is as follows. Part of the high-affinity ATP-driven potassium transport (or Kdp) system, which catalyzes the hydrolysis of ATP coupled with the electrogenic transport of potassium into the cytoplasm. This subunit binds the extracellular potassium ions and delivers the ions to the membrane domain of KdpB through an intramembrane tunnel. This chain is Potassium-transporting ATPase potassium-binding subunit, found in Rhodococcus opacus (strain B4).